The following is a 288-amino-acid chain: Probable coatomer subunit epsilon (288 aa).

Position 262 is a phosphoserine (serine 262).

Belongs to the COPE family. In terms of assembly, oligomeric complex that consists of at least the alpha, beta, beta', gamma, delta, epsilon and zeta subunits.

It is found in the cytoplasm. Its subcellular location is the golgi apparatus membrane. The protein localises to the cytoplasmic vesicle. The protein resides in the COPI-coated vesicle membrane. Its function is as follows. The coatomer is a cytosolic protein complex that binds to dilysine motifs and reversibly associates with Golgi non-clathrin-coated vesicles, which further mediate biosynthetic protein transport from the ER, via the Golgi up to the trans Golgi network. The coatomer complex is required for budding from Golgi membranes, and is essential for the retrograde Golgi-to-ER transport of dilysine-tagged proteins. This Schizosaccharomyces pombe (strain 972 / ATCC 24843) (Fission yeast) protein is Probable coatomer subunit epsilon (sec28).